Consider the following 91-residue polypeptide: Acylphosphatase (91 aa).

Residues 5-91 (CLHAYVGGRV…QGIAGFIVRR (87 aa)) form the Acylphosphatase-like domain. Active-site residues include Arg-20 and Asn-38.

This sequence belongs to the acylphosphatase family.

The catalysed reaction is an acyl phosphate + H2O = a carboxylate + phosphate + H(+). This Pseudomonas paraeruginosa (strain DSM 24068 / PA7) (Pseudomonas aeruginosa (strain PA7)) protein is Acylphosphatase (acyP).